The primary structure comprises 172 residues: MELDLTSIAPELQEELNRNVMFTTLETVKGWVRSNSLWPLTFGLACCAIEMMGTGGARYDLDRFGVIFRASPRQSDVMIVAGTVTKKMAPLLRRLYDQMPEPKWVIAMGSCATAGGPYVRSYSVVKGVDQIVPVDVYIPGCPPNPAALIYGINKLQEKIRYEAKTGKQVTNL.

The [4Fe-4S] cluster site is built by Cys-46, Cys-47, Cys-111, and Cys-141.

Belongs to the complex I 20 kDa subunit family. As to quaternary structure, NDH-1 is composed of 14 different subunits. Subunits NuoB, C, D, E, F, and G constitute the peripheral sector of the complex. [4Fe-4S] cluster is required as a cofactor.

The protein localises to the cell membrane. It catalyses the reaction a quinone + NADH + 5 H(+)(in) = a quinol + NAD(+) + 4 H(+)(out). Functionally, NDH-1 shuttles electrons from NADH, via FMN and iron-sulfur (Fe-S) centers, to quinones in the respiratory chain. The immediate electron acceptor for the enzyme in this species is believed to be a menaquinone. Couples the redox reaction to proton translocation (for every two electrons transferred, four hydrogen ions are translocated across the cytoplasmic membrane), and thus conserves the redox energy in a proton gradient. This Brevibacillus brevis (strain 47 / JCM 6285 / NBRC 100599) protein is NADH-quinone oxidoreductase subunit B.